The following is a 481-amino-acid chain: Glutamate--tRNA ligase 2 (481 aa).

The 'HIGH' region motif lies at 17–27 (PSPTGFLHIGG). The segment covering 118–139 (AEQRAKKQPQRYDGRWRDRDPS) has biased composition (basic and acidic residues). A disordered region spans residues 118-143 (AEQRAKKQPQRYDGRWRDRDPSEAPA). The 'KMSKS' region signature appears at 246-250 (KLSKR). Position 249 (lysine 249) interacts with ATP.

This sequence belongs to the class-I aminoacyl-tRNA synthetase family. Glutamate--tRNA ligase type 1 subfamily. Monomer.

The protein resides in the cytoplasm. The enzyme catalyses tRNA(Glu) + L-glutamate + ATP = L-glutamyl-tRNA(Glu) + AMP + diphosphate. Functionally, catalyzes the attachment of glutamate to tRNA(Glu) in a two-step reaction: glutamate is first activated by ATP to form Glu-AMP and then transferred to the acceptor end of tRNA(Glu). The chain is Glutamate--tRNA ligase 2 from Zymomonas mobilis subsp. mobilis (strain ATCC 31821 / ZM4 / CP4).